We begin with the raw amino-acid sequence, 201 residues long: Cold shock domain-containing protein 4 (201 aa).

At Ser2 the chain carries N-acetylserine. Residues 14–81 (RRKGTVKWFD…RPKAIEVSGP (68 aa)) form the CSD domain. The tract at residues 66–109 (EVDNSGRPKAIEVSGPDGAPVQGNSGGGGSSGGRGGFGGGGGRG) is disordered. Positions 89-109 (NSGGGGSSGGRGGFGGGGGRG) are enriched in gly residues. 2 consecutive CCHC-type zinc fingers follow at residues 136-153 (NSCF…ECSQ) and 180-197 (LSCY…DCTS).

Belongs to the cold shock protein (CSP) family. In terms of tissue distribution, mostly expressed in shoot apices and siliques, and, to a lower extent, in roots, cotyledons, stems, shoots, leaves, floral buds and flowers. Present in shoot apical meristems and siliques (at protein level). Very low levels are observed in cv. Landsberg erecta compared to cv. Columbia.

The protein localises to the cytoplasm. It localises to the nucleus. Its subcellular location is the nucleolus. Its function is as follows. Chaperone that binds to and unwinds RNA and both single-stranded DNA and double-stranded DNA (ssDNA and dsDNA DNA). Regulates the flowering transition and flower and seed development, particularly at late stages of embryo development, through regulation of gene expression (including MEA, FIS2, AP1, CAL, AG and SHP2). The chain is Cold shock domain-containing protein 4 (CSP4) from Arabidopsis thaliana (Mouse-ear cress).